Consider the following 725-residue polypeptide: Catalase-peroxidase (725 aa).

A cross-link (tryptophyl-tyrosyl-methioninium (Trp-Tyr) (with M-253)) is located at residues 99 to 227; the sequence is WHAAGTYRIA…LAAVMMGLIY (129 aa). The Proton acceptor role is filled by H100. A cross-link (tryptophyl-tyrosyl-methioninium (Tyr-Met) (with W-99)) is located at residues 227–253; sequence YVNPEGVDGNPDPLKTAHDIRITFSRM. Position 268 (H268) interacts with heme b.

It belongs to the peroxidase family. Peroxidase/catalase subfamily. As to quaternary structure, homodimer or homotetramer. It depends on heme b as a cofactor. Formation of the three residue Trp-Tyr-Met cross-link is important for the catalase, but not the peroxidase activity of the enzyme.

It carries out the reaction H2O2 + AH2 = A + 2 H2O. It catalyses the reaction 2 H2O2 = O2 + 2 H2O. Bifunctional enzyme with both catalase and broad-spectrum peroxidase activity. This is Catalase-peroxidase from Picosynechococcus sp. (strain ATCC 27264 / PCC 7002 / PR-6) (Agmenellum quadruplicatum).